Here is a 264-residue protein sequence, read N- to C-terminus: Phosphonates import ATP-binding protein PhnC (264 aa).

In terms of domain architecture, ABC transporter spans 7–254; it reads LSIRAASKTF…KLIDIYGPEF (248 aa). Position 39-46 (39-46) interacts with ATP; sequence GPSGSGKS.

The protein belongs to the ABC transporter superfamily. Phosphonates importer (TC 3.A.1.9.1) family. In terms of assembly, the complex is composed of two ATP-binding proteins (PhnC), two transmembrane proteins (PhnE) and a solute-binding protein (PhnD).

The protein resides in the cell inner membrane. It carries out the reaction phosphonate(out) + ATP + H2O = phosphonate(in) + ADP + phosphate + H(+). Functionally, part of the ABC transporter complex PhnCDE involved in phosphonates import. Responsible for energy coupling to the transport system. The protein is Phosphonates import ATP-binding protein PhnC of Caulobacter vibrioides (strain ATCC 19089 / CIP 103742 / CB 15) (Caulobacter crescentus).